Reading from the N-terminus, the 790-residue chain is Solute carrier family 26 member 9 (790 aa).

Residues 1–70 (MNQPRPRYVV…WLPKYKIKDY (70 aa)) are Cytoplasmic-facing. A helical transmembrane segment spans residues 71–96 (IIPDLLGGLSGGCIQVPQGMAFALLA). Over 97 to 100 (NLPA) the chain is Extracellular. A helical membrane pass occupies residues 101-109 (VNGLYSSFF). Residues 110 to 129 (PLLTYFFLGGIHQMVPGTFA) are Cytoplasmic-facing. The helical transmembrane segment at 130-142 (VISILVGNICLQL) threads the bilayer. The Extracellular portion of the chain corresponds to 143-162 (APESKFQIFNNVTNETYVDT). The chain crosses the membrane as a helical span at residues 163-191 (AAMEAERLHVSATLACLTAVIQMALGFMQ). Residues 192-201 (FGFVAIYLSE) are Cytoplasmic-facing. The helical transmembrane segment at 202–224 (SFIRGFMTAAGLQILISVLKYIF) threads the bilayer. The Extracellular segment spans residues 225 to 237 (GLTIPSYTGPGSI). Positions 238 to 246 (VFTFIDICK) form an intramembrane region, helical. Residues 247–254 (NLPHTNIA) lie on the Extracellular side of the membrane. Residues 255–275 (SLIFALVSGVFLVLVKELNAR) traverse the membrane as a helical segment. The Cytoplasmic portion of the chain corresponds to 276–286 (YMHKIHFPIPT). Residues 287 to 299 (EMIVVVVATAISG) traverse the membrane as a helical segment. Residues 300 to 334 (SCKMPKKYHMQIVGEIRQGFPTPVAPMVSQWKGMV) are Extracellular-facing. Residues 335–358 (GTAFSLAIVGYVINLAMGRTLASK) form a helical membrane-spanning segment. Residues 359-365 (HGYDVDS) are Cytoplasmic-facing. A helical membrane pass occupies residues 366–379 (NQEMIALGCSNFFG). Over 380 to 390 (SFFKIHVICCA) the chain is Extracellular. The helical transmembrane segment at 391 to 400 (LSVTLAVDGA) threads the bilayer. At 401–405 (GGKSQ) the chain is on the cytoplasmic side. Residues 406 to 419 (VASLCVSLVVMITM) traverse the membrane as a helical segment. At 420–431 (LVLGSYLYPLPK) the chain is on the extracellular side. The helical transmembrane segment at 432–457 (AVLGALIAVNLKNSLKQLTDPYYLWR) threads the bilayer. Residues 458 to 461 (KSKL) are Cytoplasmic-facing. Residues 462–476 (DCCVWVVSFLSSFFL) traverse the membrane as a helical segment. The Extracellular portion of the chain corresponds to 477-479 (SLP). Residues 480–498 (YGVAVGVAFSILVVIFQTQ) traverse the membrane as a helical segment. Over 499-790 (FRNGSTLAQV…MFHTETLTAL (292 aa)) the chain is Cytoplasmic. Residues 519–737 (TYNRAQEIAG…PSIHDAVLFA (219 aa)) form the STAS domain.

The protein belongs to the SLC26A/SulP transporter (TC 2.A.53) family. As to quaternary structure, homodimer. In terms of tissue distribution, expressed in stomach and trachea. Abundantly expressed in the apical domain of the surface epithelial cells and the deep cells in the gastric gland. Also expressed in heart, brain, lung and liver.

The protein resides in the cell membrane. It localises to the endomembrane system. It catalyses the reaction chloride(in) = chloride(out). The catalysed reaction is hydrogencarbonate(in) + chloride(out) = hydrogencarbonate(out) + chloride(in). Inhibited by ammonium and thiosulfate. Its function is as follows. Ion transporter that can act both as an ion channel and anion exchanger. Mainly acts as a chloride channel, which mediate uncoupled chloride anion transport in an alternate-access mechanism where a saturable binding site is alternately exposed to either one or the other side of the membrane. Also acts as a DIDS- and thiosulfate- sensitive anion exchanger the exchange of chloride for bicarbonate ions across the cell membrane. The chain is Solute carrier family 26 member 9 from Mus musculus (Mouse).